A 119-amino-acid polypeptide reads, in one-letter code: Anamorsin homolog (119 aa).

Over residues 1–15 (MSSSATSTQAFSLKT) the composition is skewed to polar residues. 2 disordered regions span residues 1-21 (MSSS…PIPD) and 33-119 (LKQA…TDDV). The [2Fe-2S] cluster site is built by Cys42, Cys49, Cys52, and Cys54. The fe-S binding site A stretch occupies residues 42–54 (CTTRRRACKNCVC). The [4Fe-4S] cluster site is built by Cys81, Cys84, Cys92, and Cys95. Short sequence motifs (cx2C motif) lie at residues 81-84 (CGNC) and 92-95 (CANC). Residues 81-95 (CGNCSKGDAFRCANC) form a fe-S binding site B region.

This sequence belongs to the anamorsin family. As to quaternary structure, monomer. [2Fe-2S] cluster is required as a cofactor. It depends on [4Fe-4S] cluster as a cofactor.

It is found in the cytoplasm. The protein localises to the mitochondrion intermembrane space. Functionally, component of the cytosolic iron-sulfur (Fe-S) protein assembly (CIA) machinery. Required for the maturation of extramitochondrial Fe-S proteins. Part of an electron transfer chain functioning in an early step of cytosolic Fe-S biogenesis, facilitating the de novo assembly of a [4Fe-4S] cluster on the cytosolic Fe-S scaffold complex. Electrons are transferred from NADPH via a FAD- and FMN-containing diflavin oxidoreductase. Together with the diflavin oxidoreductase, also required for the assembly of the diferric tyrosyl radical cofactor of ribonucleotide reductase (RNR), probably by providing electrons for reduction during radical cofactor maturation in the catalytic small subunit. The sequence is that of Anamorsin homolog from Leishmania infantum.